The following is a 293-amino-acid chain: Histone H3-like centromeric protein CSE4 (293 aa).

Residues 132–141 (QDLSYDESDY) show a composition bias toward acidic residues. The disordered stretch occupies residues 132-169 (QDLSYDESDYSDPLQEIDSNYRESPRRTTDKILKSSSK). Over residues 150–164 (SNYRESPRRTTDKIL) the composition is skewed to basic and acidic residues. The segment at 157–291 (RRTTDKILKS…VQLARRIRGQ (135 aa)) is H3-like.

It belongs to the histone H3 family. In terms of assembly, component of centromeric nucleosomes, where DNA is wrapped around a histone octamer core. The octamer contains two molecules each of H2A, H2B, CSE4/CENPA and H4 assembled in one CSE4-H4 heterotetramer and two H2A-H2B heterodimers. Interacts with the inner kinetochore. Ubiquitinated. Is degraded through ubiquitin-mediated proteolysis when not protected by its association to the kinetochore.

The protein resides in the nucleus. Its subcellular location is the chromosome. It is found in the centromere. In terms of biological role, histone H3-like nucleosomal protein that is specifically found in centromeric nucleosomes. Replaces conventional H3 in the nucleosome core of centromeric chromatin that serves as an assembly site for the inner kinetochore. Required for recruitment and assembly of kinetochore proteins, mitotic progression and chromosome segregation. May serve as an epigenetic mark that propagates centromere identity through replication and cell division. The sequence is that of Histone H3-like centromeric protein CSE4 (CSE4) from Monosporozyma servazzii (Yeast).